Here is a 241-residue protein sequence, read N- to C-terminus: Protein GrpE (241 aa).

The span at 28–49 (QNCQKEETQTTNKDNQKEDETF) shows a compositional bias: basic and acidic residues. The disordered stretch occupies residues 28–78 (QNCQKEETQTTNKDNQKEDETFKNQPNKTKQTNTKQQKHLSKESSHQQITK). The segment covering 50-62 (KNQPNKTKQTNTK) has biased composition (low complexity).

This sequence belongs to the GrpE family. In terms of assembly, homodimer.

Its subcellular location is the cytoplasm. Functionally, participates actively in the response to hyperosmotic and heat shock by preventing the aggregation of stress-denatured proteins, in association with DnaK and GrpE. It is the nucleotide exchange factor for DnaK and may function as a thermosensor. Unfolded proteins bind initially to DnaJ; upon interaction with the DnaJ-bound protein, DnaK hydrolyzes its bound ATP, resulting in the formation of a stable complex. GrpE releases ADP from DnaK; ATP binding to DnaK triggers the release of the substrate protein, thus completing the reaction cycle. Several rounds of ATP-dependent interactions between DnaJ, DnaK and GrpE are required for fully efficient folding. The chain is Protein GrpE from Aster yellows witches'-broom phytoplasma (strain AYWB).